Reading from the N-terminus, the 314-residue chain is tRNA uridine(34) hydroxylase (314 aa).

The 95-residue stretch at A135–S229 folds into the Rhodanese domain. The active-site Cysteine persulfide intermediate is C189.

Belongs to the TrhO family.

The catalysed reaction is uridine(34) in tRNA + AH2 + O2 = 5-hydroxyuridine(34) in tRNA + A + H2O. Catalyzes oxygen-dependent 5-hydroxyuridine (ho5U) modification at position 34 in tRNAs. This is tRNA uridine(34) hydroxylase from Sinorhizobium fredii (strain NBRC 101917 / NGR234).